The following is a 582-amino-acid chain: Phosphoglucomutase, cytoplasmic (582 aa).

Arginine 25 and serine 124 together coordinate alpha-D-glucose 1,6-bisphosphate. The Phosphoserine intermediate role is filled by serine 124. The Mg(2+) site is built by serine 124, aspartate 299, aspartate 301, and aspartate 303. Serine 124 carries the post-translational modification Phosphoserine. Positions 303, 304, 367, 386, 388, and 399 each coordinate alpha-D-glucose 1,6-bisphosphate.

It belongs to the phosphohexose mutase family. Monomer. Mg(2+) is required as a cofactor.

It localises to the cytoplasm. It carries out the reaction alpha-D-glucose 1-phosphate = alpha-D-glucose 6-phosphate. It catalyses the reaction O-phospho-L-seryl-[protein] + alpha-D-glucose 1-phosphate = alpha-D-glucose 1,6-bisphosphate + L-seryl-[protein]. The catalysed reaction is alpha-D-glucose 1,6-bisphosphate + L-seryl-[protein] = O-phospho-L-seryl-[protein] + alpha-D-glucose 6-phosphate. Its function is as follows. Catalyzes the reversible isomerization of alpha-D-glucose 1-phosphate to alpha-D-glucose 6-phosphate. The mechanism proceeds via the intermediate compound alpha-D-glucose 1,6-bisphosphate. This enzyme participates in both the breakdown and synthesis of glucose. In Populus tremula (European aspen), this protein is Phosphoglucomutase, cytoplasmic (PGM1).